Consider the following 503-residue polypeptide: Glutamate--tRNA ligase 1 (503 aa).

A 'HIGH' region motif is present at residues 17-27 (PSPTGFLHIGN). The short motif at 261–265 (KLSKR) is the 'KMSKS' region element. Residue Lys-264 coordinates ATP.

This sequence belongs to the class-I aminoacyl-tRNA synthetase family. Glutamate--tRNA ligase type 1 subfamily. As to quaternary structure, monomer.

The protein resides in the cytoplasm. The enzyme catalyses tRNA(Glu) + L-glutamate + ATP = L-glutamyl-tRNA(Glu) + AMP + diphosphate. In terms of biological role, catalyzes the attachment of glutamate to tRNA(Glu) in a two-step reaction: glutamate is first activated by ATP to form Glu-AMP and then transferred to the acceptor end of tRNA(Glu). This is Glutamate--tRNA ligase 1 from Levilactobacillus brevis (strain ATCC 367 / BCRC 12310 / CIP 105137 / JCM 1170 / LMG 11437 / NCIMB 947 / NCTC 947) (Lactobacillus brevis).